The following is a 139-amino-acid chain: Large ribosomal subunit protein uL16 (139 aa).

It belongs to the universal ribosomal protein uL16 family. As to quaternary structure, part of the 50S ribosomal subunit.

Functionally, binds 23S rRNA and is also seen to make contacts with the A and possibly P site tRNAs. This chain is Large ribosomal subunit protein uL16, found in Treponema denticola (strain ATCC 35405 / DSM 14222 / CIP 103919 / JCM 8153 / KCTC 15104).